Consider the following 382-residue polypeptide: S-adenosylmethionine synthase (382 aa).

Histidine 15 contacts ATP. Aspartate 17 lines the Mg(2+) pocket. Glutamate 43 is a binding site for K(+). Glutamate 56 and glutamine 99 together coordinate L-methionine. The flexible loop stretch occupies residues glutamine 99–arginine 109. ATP is bound by residues aspartate 164–lysine 166, arginine 230–phenylalanine 231, aspartate 239, arginine 245–lysine 246, alanine 262, and lysine 266. L-methionine is bound at residue aspartate 239. Lysine 270 provides a ligand contact to L-methionine.

This sequence belongs to the AdoMet synthase family. Homotetramer; dimer of dimers. Requires Mg(2+) as cofactor. The cofactor is K(+).

Its subcellular location is the cytoplasm. The catalysed reaction is L-methionine + ATP + H2O = S-adenosyl-L-methionine + phosphate + diphosphate. Its pathway is amino-acid biosynthesis; S-adenosyl-L-methionine biosynthesis; S-adenosyl-L-methionine from L-methionine: step 1/1. Catalyzes the formation of S-adenosylmethionine (AdoMet) from methionine and ATP. The overall synthetic reaction is composed of two sequential steps, AdoMet formation and the subsequent tripolyphosphate hydrolysis which occurs prior to release of AdoMet from the enzyme. This is S-adenosylmethionine synthase from Psychromonas ingrahamii (strain DSM 17664 / CCUG 51855 / 37).